A 492-amino-acid chain; its full sequence is E1B 55 kDa protein (492 aa).

Residues 22–112 (ENMEGSQDED…ERNPSGNNSR (91 aa)) form a disordered region. The segment covering 34 to 44 (RLLASAASGSS) has biased composition (low complexity). Phosphoserine occurs at positions 486 and 487. Threonine 491 carries the phosphothreonine modification.

This sequence belongs to the adenoviridae E1B 55 kDa protein family. As to quaternary structure, interacts with host PML-4 and PML-5; this interaction promotes efficient subnuclear targeting of E1B-55K to PML nuclear bodies. Interacts with E4-ORF3 protein. Interacts with E4-ORF6 protein.

It localises to the host nucleus. It is found in the host cytoplasm. In terms of biological role, plays a major role to prevent cellular inhibition of viral genome replication. Assembles an SCF-like E3 ubiquitin ligase complex based on the cellular proteins ELOB, ELOC, CUL5 and RBX1, in cooperation with viral E4orf6. This viral RING-type ligase ubiquitinates cellular substrates and targets them to proteasomal degradation: TP53/p53, LIG4, MRE11-RAD50-NBS1 (MRN) complex, ITGA3, DAXX and BLM. E1B-55K probably acts as the substrate-specific adapter of the SCF-like E3 ubiquitin ligase complex. Degradation of host TP53/p53 activity is essential for preventing E1A-induced TP53 accumulation that would otherwise lead to cell apoptosis and growth arrest. E1B-55K also inactivates TP53 transcription-factor activity by binding its transactivation domain. E1B-55K also functions as a SUMO1 E3 ligase for TP53 which causes the latter to be sequestered in promyelocytic leukemia (PML) nuclear bodies thereby contributing to maximal inhibition of TP53 function. The sequence is that of E1B 55 kDa protein from Human adenovirus B serotype 7 (HAdV-7).